The chain runs to 527 residues: UPF0053 protein YegH (527 aa).

A run of 7 helical transmembrane segments spans residues 14-34 (ITLIVIELVLGIDNLVFIAIL), 51-71 (LLLAMLMRLLLLASISWLVTL), 81-101 (FTFSARDLIMLFGGFFLLFKA), 122-142 (GAKFWGVVTQIVVLDAIFSLD), 145-165 (ITAVGMVDHLLVMMAAVVIAI), 185-205 (IVILCLSFLLMIGFSLVAEGF), and 207-227 (FVIPKGYLYAAIGFSVMIEAL). CBS domains are found at residues 306–366 (MTSR…GEPL) and 371–429 (LIRQ…PNEV).

Belongs to the UPF0053 family.

The protein resides in the cell membrane. The chain is UPF0053 protein YegH (yegH) from Shigella flexneri.